Here is a 33-residue protein sequence, read N- to C-terminus: Gastrin (33 aa).

Q1 carries the pyrrolidone carboxylic acid modification. Position 28 is a sulfotyrosine (Y28). F33 bears the Phenylalanine amide mark.

The protein belongs to the gastrin/cholecystokinin family. Sulfation enhances proteolytic processing, and blocks peptide degradation. Levels of sulfation differ between proteolytically-cleaved gastrins and between tissues.

It is found in the secreted. Gastrin stimulates the stomach mucosa to produce and secrete hydrochloric acid and the pancreas to secrete its digestive enzymes. It also stimulates smooth muscle contraction and increases blood circulation and water secretion in the stomach and intestine. The chain is Gastrin (GAST) from Macropus giganteus (Eastern gray kangaroo).